The chain runs to 464 residues: ATP synthase subunit beta (464 aa).

Residue 154–161 coordinates ATP; it reads GGAGVGKT.

This sequence belongs to the ATPase alpha/beta chains family. F-type ATPases have 2 components, CF(1) - the catalytic core - and CF(0) - the membrane proton channel. CF(1) has five subunits: alpha(3), beta(3), gamma(1), delta(1), epsilon(1). CF(0) has three main subunits: a(1), b(2) and c(9-12). The alpha and beta chains form an alternating ring which encloses part of the gamma chain. CF(1) is attached to CF(0) by a central stalk formed by the gamma and epsilon chains, while a peripheral stalk is formed by the delta and b chains.

The protein localises to the cell inner membrane. The enzyme catalyses ATP + H2O + 4 H(+)(in) = ADP + phosphate + 5 H(+)(out). Functionally, produces ATP from ADP in the presence of a proton gradient across the membrane. The catalytic sites are hosted primarily by the beta subunits. In Blochmanniella floridana, this protein is ATP synthase subunit beta.